Here is a 62-residue protein sequence, read N- to C-terminus: Small ribosomal subunit protein eS27 (62 aa).

Zn(2+) contacts are provided by Cys17, Cys20, Cys36, and Cys39. The segment at 17–39 (CPDCENEQIIFEKASTVVDCVVC) adopts a C4-type zinc-finger fold.

Belongs to the eukaryotic ribosomal protein eS27 family. As to quaternary structure, part of the 30S ribosomal subunit. Zn(2+) serves as cofactor.

The chain is Small ribosomal subunit protein eS27 from Methanosphaerula palustris (strain ATCC BAA-1556 / DSM 19958 / E1-9c).